The primary structure comprises 375 residues: 23S rRNA (uracil(747)-C(5))-methyltransferase RlmC (375 aa).

Residues C3, C11, C14, and C87 each coordinate [4Fe-4S] cluster. Q212, F241, E262, and N307 together coordinate S-adenosyl-L-methionine. The Nucleophile role is filled by C334.

Belongs to the class I-like SAM-binding methyltransferase superfamily. RNA M5U methyltransferase family. RlmC subfamily.

The enzyme catalyses uridine(747) in 23S rRNA + S-adenosyl-L-methionine = 5-methyluridine(747) in 23S rRNA + S-adenosyl-L-homocysteine + H(+). Catalyzes the formation of 5-methyl-uridine at position 747 (m5U747) in 23S rRNA. The protein is 23S rRNA (uracil(747)-C(5))-methyltransferase RlmC of Salmonella dublin (strain CT_02021853).